The primary structure comprises 68 residues: Conotoxin Em11.5 (68 aa).

A signal peptide spans Met-1–Thr-26. Intrachain disulfides connect Cys-29–Cys-43, Cys-36–Cys-48, Cys-42–Cys-52, and Cys-47–Cys-56. Residue Phe-60 is modified to Phenylalanine amide. The propeptide occupies Ala-64–Glu-68.

Belongs to the conotoxin I2 superfamily. In terms of tissue distribution, expressed by the venom duct.

Its subcellular location is the secreted. In Conus emaciatus (False virgin cone), this protein is Conotoxin Em11.5.